Reading from the N-terminus, the 223-residue chain is Proteasome subunit beta type-1 (223 aa).

Belongs to the peptidase T1B family. In terms of assembly, component of the 20S core complex of the 26S proteasome. The 26S proteasome is composed of a core protease (CP), known as the 20S proteasome, capped at one or both ends by the 19S regulatory particle (RP/PA700). The 20S proteasome core is composed of 28 subunits that are arranged in four stacked rings, resulting in a barrel-shaped structure. The two end rings are each formed by seven alpha subunits, and the two central rings are each formed by seven beta subunits. The catalytic chamber with the active sites is on the inside of the barrel. As to expression, present in all tissues examined. Slightly lower levels in roots.

The protein resides in the cytoplasm. It localises to the nucleus. In terms of biological role, non-catalytic component of the proteasome, a multicatalytic proteinase complex which is characterized by its ability to cleave peptides with Arg, Phe, Tyr, Leu, and Glu adjacent to the leaving group at neutral or slightly basic pH. The proteasome has an ATP-dependent proteolytic activity. The polypeptide is Proteasome subunit beta type-1 (PBF1) (Arabidopsis thaliana (Mouse-ear cress)).